A 610-amino-acid polypeptide reads, in one-letter code: Nuclear factor 7, ovary (610 aa).

The Tudor-knot domain occupies 21-75; sequence NVGSTYPCKRSDGSQHDADIVKTRYNKQAGREEYYVHYVGLNRRQNEWVDKSRLV. The disordered stretch occupies residues 79–127; that stretch reads PPKEVETNGTDQEEMTEPTEQPDSKTPQKRKLEEPEPEPKKAKVEDKDA. Threonine 104 is modified (phosphothreonine; by CDK1). Basic and acidic residues predominate over residues 108-127; that stretch reads RKLEEPEPEPKKAKVEDKDA. An RING-type zinc finger spans residues 146–186; that stretch reads CPLCVELFKDPVMVACGHNFCRSCIDKVWEGQSSFACPECK. A B box-type zinc finger spans residues 220 to 261; that stretch reads RPLEKCSEHDERLKLYCKDDGTLGCVICRDSLKHASHNFLPI. Cysteine 225, histidine 228, cysteine 247, and histidine 253 together coordinate Zn(2+). Residues 295–374 are a coiled coil; the sequence is DKIEQHNKNV…AKERMEETDS (80 aa). The B30.2/SPRY domain occupies 415 to 610; that stretch reads PIQYIMWKEL…VDALRFVHNQ (196 aa).

Monomer. In terms of tissue distribution, abundant in oocytes. At the neurula stage, low expression in dorsal embryo region including neural folds and somites.

It localises to the nucleus. Its function is as follows. Transcription factor that determines dorsal-ventral body axis. The protein is Nuclear factor 7, ovary of Xenopus laevis (African clawed frog).